A 571-amino-acid chain; its full sequence is Proline--tRNA ligase (571 aa).

The protein belongs to the class-II aminoacyl-tRNA synthetase family. ProS type 1 subfamily. In terms of assembly, homodimer.

It is found in the cytoplasm. It carries out the reaction tRNA(Pro) + L-proline + ATP = L-prolyl-tRNA(Pro) + AMP + diphosphate. In terms of biological role, catalyzes the attachment of proline to tRNA(Pro) in a two-step reaction: proline is first activated by ATP to form Pro-AMP and then transferred to the acceptor end of tRNA(Pro). As ProRS can inadvertently accommodate and process non-cognate amino acids such as alanine and cysteine, to avoid such errors it has two additional distinct editing activities against alanine. One activity is designated as 'pretransfer' editing and involves the tRNA(Pro)-independent hydrolysis of activated Ala-AMP. The other activity is designated 'posttransfer' editing and involves deacylation of mischarged Ala-tRNA(Pro). The misacylated Cys-tRNA(Pro) is not edited by ProRS. This Aliivibrio fischeri (strain MJ11) (Vibrio fischeri) protein is Proline--tRNA ligase.